The chain runs to 870 residues: DNA topoisomerase 1 (870 aa).

One can recognise a Toprim domain in the interval M1–A128. The Topo IA-type catalytic domain maps to Y143–T578. The segment at S180–Q185 is interaction with DNA. Y299 acts as the O-(5'-phospho-DNA)-tyrosine intermediate in catalysis. 3 C4-type zinc fingers span residues C603–C627, C693–C717, and C784–C807.

It belongs to the type IA topoisomerase family. As to quaternary structure, monomer.

It catalyses the reaction ATP-independent breakage of single-stranded DNA, followed by passage and rejoining.. Its function is as follows. Releases the supercoiling and torsional tension of DNA, which is introduced during the DNA replication and transcription, by transiently cleaving and rejoining one strand of the DNA duplex. Introduces a single-strand break via transesterification at a target site in duplex DNA. The scissile phosphodiester is attacked by the catalytic tyrosine of the enzyme, resulting in the formation of a DNA-(5'-phosphotyrosyl)-enzyme intermediate and the expulsion of a 3'-OH DNA strand. The free DNA strand then undergoes passage around the unbroken strand, thus removing DNA supercoils. Finally, in the religation step, the DNA 3'-OH attacks the covalent intermediate to expel the active-site tyrosine and restore the DNA phosphodiester backbone. The polypeptide is DNA topoisomerase 1 (topX) (Bacillus anthracis).